We begin with the raw amino-acid sequence, 147 residues long: Hemoglobin subunit beta (147 aa).

The 145-residue stretch at 3-147 (HWTAEEKQLI…VAHALARKYH (145 aa)) folds into the Globin domain. Residues His64 and His93 each coordinate heme b.

This sequence belongs to the globin family. As to quaternary structure, heterotetramer of 2 alpha (or alpha-D) and 2 beta chains. As to expression, red blood cells.

Functionally, involved in oxygen transport from the lung to the various peripheral tissues. The beta chain is a component of adult hemoglobin A and D. The chain is Hemoglobin subunit beta (HBB) from Gallus gallus (Chicken).